We begin with the raw amino-acid sequence, 62 residues long: Defensin BmKDfsin5 (62 aa).

The signal sequence occupies residues 1 to 24 (MKVIALFFLFAFIFCTLEVAIVEA). 3 disulfide bridges follow: Cys28/Cys49, Cys35/Cys57, and Cys39/Cys59.

The protein belongs to the invertebrate defensin family. Type 2 subfamily. In terms of tissue distribution, highly expressed in non-venom gland (hemolymph) and moderately expressed in venom gland.

The protein resides in the secreted. In terms of biological role, antibacterial peptide active against Gram-positive bacteria (including S.aureus ATCC25923 (MIC=2.5 uM), M.luteus AB93113 (MIC=2.5 uM), and the antibiotic-resistant S.epidermidis PRSE P1389 (MIC=1.25 uM)), but not against Gram-negative bacteria (including E.coli and P.aeruginosa). Also has weak blocking activity on Kv1.1/KCNA1 (8.7% inhibition), Kv1.2/KCNA2 (10.2% inhibition), Kv1.3/KCNA3 (9.0% inhibition), KCa3.1/KCNN4/IK (9.1% inhibition), KCa2.3/KCNN3/SK3 (46.3% inhibition) and Kv11.1/KCNH2/ERG1 (16.9% inhibition) channels (tested at 1 uM). It inhibits potassium channel current by interacting with the pore region. This chain is Defensin BmKDfsin5, found in Olivierus martensii (Manchurian scorpion).